A 203-amino-acid polypeptide reads, in one-letter code: Inactive ribonuclease-like protein 9 (203 aa).

Positions 1-25 are cleaved as a signal peptide; it reads MRTPITTHSLLLLLLLQQLLQPVQL. Intrachain disulfides connect C96/C151, C114/C166, and C121/C128. N-linked (GlcNAc...) asparagine glycosylation is found at N129 and N141.

It belongs to the pancreatic ribonuclease family.

The protein resides in the secreted. Functionally, does not exhibit any ribonuclease activity. The sequence is that of Inactive ribonuclease-like protein 9 (RNASE9) from Macaca assamensis (Assam macaque).